The following is a 189-amino-acid chain: Pyridoxal 5'-phosphate synthase subunit PdxT (189 aa).

An L-glutamine-binding site is contributed by 47-49; it reads GES. Cys-79 functions as the Nucleophile in the catalytic mechanism. L-glutamine contacts are provided by residues Arg-106 and 135-136; that span reads IR. Residues His-171 and Glu-173 each act as charge relay system in the active site.

Belongs to the glutaminase PdxT/SNO family. In the presence of PdxS, forms a dodecamer of heterodimers. Only shows activity in the heterodimer.

It catalyses the reaction aldehydo-D-ribose 5-phosphate + D-glyceraldehyde 3-phosphate + L-glutamine = pyridoxal 5'-phosphate + L-glutamate + phosphate + 3 H2O + H(+). The catalysed reaction is L-glutamine + H2O = L-glutamate + NH4(+). It functions in the pathway cofactor biosynthesis; pyridoxal 5'-phosphate biosynthesis. Its function is as follows. Catalyzes the hydrolysis of glutamine to glutamate and ammonia as part of the biosynthesis of pyridoxal 5'-phosphate. The resulting ammonia molecule is channeled to the active site of PdxS. The chain is Pyridoxal 5'-phosphate synthase subunit PdxT from Desulforudis audaxviator (strain MP104C).